Reading from the N-terminus, the 481-residue chain is GTPase Der (481 aa).

EngA-type G domains lie at 3-166 (PVVA…ESDF) and 194-367 (IKLA…MSAT). Residues 9–16 (GRPNVGKS), 56–60 (DTGGI), 118–121 (NKVD), 200–207 (GKPNVGKS), 247–251 (DTAGV), and 312–315 (NKWD) each bind GTP. Residues 368–452 (KRINTALLTQ…PIKIEFREGN (85 aa)) enclose the KH-like domain.

This sequence belongs to the TRAFAC class TrmE-Era-EngA-EngB-Septin-like GTPase superfamily. EngA (Der) GTPase family. Associates with the 50S ribosomal subunit.

In terms of biological role, GTPase that plays an essential role in the late steps of ribosome biogenesis. This Alteromonas mediterranea (strain DSM 17117 / CIP 110805 / LMG 28347 / Deep ecotype) protein is GTPase Der.